Consider the following 218-residue polypeptide: GTP cyclohydrolase 1 (218 aa).

Cys109, His112, and Cys180 together coordinate Zn(2+).

Belongs to the GTP cyclohydrolase I family. Toroid-shaped homodecamer, composed of two pentamers of five dimers.

It catalyses the reaction GTP + H2O = 7,8-dihydroneopterin 3'-triphosphate + formate + H(+). It functions in the pathway cofactor biosynthesis; 7,8-dihydroneopterin triphosphate biosynthesis; 7,8-dihydroneopterin triphosphate from GTP: step 1/1. This Actinobacillus pleuropneumoniae serotype 5b (strain L20) protein is GTP cyclohydrolase 1.